A 194-amino-acid chain; its full sequence is Holliday junction branch migration complex subunit RuvA (194 aa).

Positions 1 to 62 (MIGYLKGNVI…EDSLDLYGFK (62 aa)) are domain I. A domain II region spans residues 63–136 (TMEERELFET…KGKLKDMSGD (74 aa)). The tract at residues 136 to 140 (DFEEP) is flexible linker. Residues 141 to 194 (LPDNRNTELSDALASLGYSELEIEEALSNADIKNNGSLEENIKKALGYLGSKGS) form a domain III region.

The protein belongs to the RuvA family. In terms of assembly, homotetramer. Forms an RuvA(8)-RuvB(12)-Holliday junction (HJ) complex. HJ DNA is sandwiched between 2 RuvA tetramers; dsDNA enters through RuvA and exits via RuvB. An RuvB hexamer assembles on each DNA strand where it exits the tetramer. Each RuvB hexamer is contacted by two RuvA subunits (via domain III) on 2 adjacent RuvB subunits; this complex drives branch migration. In the full resolvosome a probable DNA-RuvA(4)-RuvB(12)-RuvC(2) complex forms which resolves the HJ.

It localises to the cytoplasm. Functionally, the RuvA-RuvB-RuvC complex processes Holliday junction (HJ) DNA during genetic recombination and DNA repair, while the RuvA-RuvB complex plays an important role in the rescue of blocked DNA replication forks via replication fork reversal (RFR). RuvA specifically binds to HJ cruciform DNA, conferring on it an open structure. The RuvB hexamer acts as an ATP-dependent pump, pulling dsDNA into and through the RuvAB complex. HJ branch migration allows RuvC to scan DNA until it finds its consensus sequence, where it cleaves and resolves the cruciform DNA. The polypeptide is Holliday junction branch migration complex subunit RuvA (Halothermothrix orenii (strain H 168 / OCM 544 / DSM 9562)).